A 386-amino-acid polypeptide reads, in one-letter code: 5-hydroxytryptamine receptor 1B (386 aa).

The interval 1–25 (MEEPGARCAPPPPAGSQTQTPSSNL) is disordered. Residues 1 to 42 (MEEPGARCAPPPPAGSQTQTPSSNLSHNCSADSYIYQDSIAL) lie on the Extracellular side of the membrane. Polar residues predominate over residues 16–25 (SQTQTPSSNL). N-linked (GlcNAc...) asparagine glycans are attached at residues Asn24 and Asn28. A helical transmembrane segment spans residues 43 to 68 (PWKVLLVALLALITLATTLSNAFVIA). The Cytoplasmic segment spans residues 69–82 (TVYRTRKLHTPANY). The chain crosses the membrane as a helical span at residues 83–107 (LIASLAVTDLLVSILVMPISTMYTV). Over 108–115 (TGRWTLGQ) the chain is Extracellular. A helical transmembrane segment spans residues 116–141 (VVCDFWLSSDITCCTASIMHLCVIAL). A disulfide bond links Cys118 and Cys195. Asp125 and Thr130 together coordinate ergotamine. A DRY motif; important for ligand-induced conformation changes and signaling motif is present at residues 142-144 (DRY). Residues 142–161 (DRYWAITDAVEYSAKRTPRR) lie on the Cytoplasmic side of the membrane. A helical transmembrane segment spans residues 162–180 (AAVMIALVWVFSISISLPR). The Extracellular portion of the chain corresponds to 181–201 (FFWRQAKAEEEVLDCLVNTDH). Val197 is a binding site for ergotamine. A helical transmembrane segment spans residues 202–225 (VLYTVYSTVGAFYLPTLLLIALYG). Residues 226–311 (RIYVEARSRI…AARERKATKT (86 aa)) are Cytoplasmic-facing. The tract at residues 253-272 (ISDSPGSTSSVTSINSRVPD) is disordered. Residues 254–268 (SDSPGSTSSVTSINS) show a composition bias toward low complexity. The helical transmembrane segment at 312-333 (LGIILGAFIVCWLPFFIISLVM) threads the bilayer. At 334 to 343 (PICKDACWFH) the chain is on the extracellular side. A helical membrane pass occupies residues 344-366 (MAIFDFFNWLGYLNSLINPIIYT). The short motif at 361 to 365 (NPIIY) is the NPxxY motif; important for ligand-induced conformation changes and signaling element. At 367 to 386 (MPNEDFKQAFHKLIRFKCTG) the chain is on the cytoplasmic side. A lipid anchor (S-palmitoyl cysteine) is attached at Cys384.

The protein belongs to the G-protein coupled receptor 1 family. Homodimer. Heterodimer with HTR1D. Post-translationally, phosphorylated. Desensitization of the receptor may be mediated by its phosphorylation. In terms of processing, palmitoylated.

The protein resides in the cell membrane. Functionally, G-protein coupled receptor for 5-hydroxytryptamine (serotonin). Also functions as a receptor for ergot alkaloid derivatives, various anxiolytic and antidepressant drugs and other psychoactive substances, such as lysergic acid diethylamide (LSD). Ligand binding causes a conformation change that triggers signaling via guanine nucleotide-binding proteins (G proteins) and modulates the activity of downstream effectors, such as adenylate cyclase. HTR1B is coupled to G(i)/G(o) G alpha proteins and mediates inhibitory neurotransmission by inhibiting adenylate cyclase activity. Arrestin family members inhibit signaling via G proteins and mediate activation of alternative signaling pathways. Regulates the release of 5-hydroxytryptamine, dopamine and acetylcholine in the brain, and thereby affects neural activity, nociceptive processing, pain perception, mood and behavior. Besides, plays a role in vasoconstriction of cerebral arteries. The sequence is that of 5-hydroxytryptamine receptor 1B (HTR1B) from Spalax ehrenbergi (Middle East blind mole rat).